Reading from the N-terminus, the 146-residue chain is MEFWKTKRLEELNPEEWESLCDGCGKCCLNKIIDDETDELYYTNAACKLLDRDACHCRHYSERFTFVPGCAAITPDNIASLTWLPDSCAYVRLFQGRDLPSWHPLVTGSKEAMHAAGMSVKGKAVCETKVRYLEDHIVLWPLKDVD.

This sequence belongs to the UPF0260 family.

The sequence is that of UPF0260 protein Sama_1927 from Shewanella amazonensis (strain ATCC BAA-1098 / SB2B).